Here is a 623-residue protein sequence, read N- to C-terminus: MATVLSRALKLPGKKSPDLGEYDPLTQADSDESEDDLVLNIQKNGGVKNGKSPPEEMQDPDSDVEVGMTKQHTSERAPEGYPAEAAGSLEQKAAPSLMPYLRTAVFLLTVVISMILVLVCAFLIPCPPRDLHNTWNHNLGQGAGGVLSPLELCDVNGDGLPDILIVFTALMNASVMGVSTPSVTVVALSGMNGSTLWSIQLPEETRSVQCKGLSLGSPAEPICLVTGTAKFLSLLSASTGKTIWTLNSIHLSDGILAAPAATLPDVDGDGIRDIVVLALKETQPDVFFVLVSGKTGAALGGPVKYNVIGEGKVIGPQVHITSRGAIYILFGFGNVQAIALRDIFTQARNRDSFPMMLHQEEPEWEKRRSVNLSELIDIYSGGVDFLQTIKAPDTNCSNLLITTKEGLILLQGQDLEPRWTLEIQNISSQPVLGYFSADQTLDFMLQAQTGNGKKKVVVVDGKSGLPVWKQELPWQKQQLDALSVMTLDKKSVFLFWADEAQPVLHSLHPGPRSERPGLHHLYLLHPVFPTVLLDLTNATDKVIASAVGINDLQKDAFHITVTTTATSEKQPGFLSVSKLGLKWAMMTQGRMVWLKDTTTPKISRGEVRRFLARLKFVDFPHKL.

The disordered stretch occupies residues 1-82; it reads MATVLSRALK…TSERAPEGYP (82 aa). A helical transmembrane segment spans residues 104–124; it reads AVFLLTVVISMILVLVCAFLI.

It belongs to the FAM234 family.

The protein localises to the membrane. Its subcellular location is the golgi outpost. The protein resides in the cytoplasm. It localises to the cytoskeleton. It is found in the microtubule organizing center. This is Protein FAM234B (FAM234B) from Gallus gallus (Chicken).